The primary structure comprises 415 residues: YDG domain-containing protein At5g47160 (415 aa).

The disordered stretch occupies residues 163–186 (KKLSNASRLRANAHRPTQHKDERR). Positions 262–407 (GSVPGIKVGD…NILFKFKLRR (146 aa)) constitute a YDG domain.

The protein localises to the nucleus. This is YDG domain-containing protein At5g47160 from Arabidopsis thaliana (Mouse-ear cress).